A 566-amino-acid chain; its full sequence is MKISRQAYADMFGPTVGDKVRLADTELWIEVEKDFTTYGEEVKFGGGKVIRDGMGQGQLMAADVVDTLITNALIIDHWGIVKADVGIKNGRIAAIGKAGNPDIQPDVTIAVGAATEVIAGEGMILTAGGVDTHIHFICPQQIEEALMSGVTTMIGGGTGPATGTNATTVTPGPWHMARMLQASDSFPMNIGFTGKGNVSLPGPLIEQVKAGAIGLKLHEDWGTTPAAIDNCLSVADEYDVQVAIHSDTLNESGFVETTLAAFKNRTIHTYHTEGAGGGHAPDIIKACGSPNVLPSSTNPTRPFTRNTIDEHLDMLMVCHHLDPSIAEDVAFAESRIRRETIAAEDILHDLGAFSMLSSDSQAMGRVGEVIMRTWQTADKMKKQRGPLPQDGPGNDNFRAKRYIAKYTINPAITHGISHEVGSIEVGKWADLVLWRPAFFGVKPTLILKGGAIAASLMGDANASIPTPQPVHYRPMFASYGSSLHATSLTFISQAAFDAGVPESLGLKKQIGVVKGCRTVQKKDLIHNDYLPDIEVDPQTYQVKADGVLLWCEPADVLPMAQRYFLF.

The 439-residue stretch at 128-566 (GGVDTHIHFI…LPMAQRYFLF (439 aa)) folds into the Urease domain. Positions 133, 135, and 216 each coordinate Ni(2+). Position 216 is an N6-carboxylysine (Lys216). Residue His218 participates in substrate binding. The Ni(2+) site is built by His245 and His271. The active-site Proton donor is the His319. Residue Asp359 coordinates Ni(2+).

This sequence belongs to the metallo-dependent hydrolases superfamily. Urease alpha subunit family. May form a heterohexamer of 3 UreC (alpha) and 3 UreAB (gamma/beta) subunits. May also form a heterotrimer of UreA (gamma), UreB (beta) and UreC (alpha) subunits. Three heterotrimers associate to form the active enzyme. The cofactor is Ni cation. Post-translationally, carboxylation allows a single lysine to coordinate two nickel ions.

It localises to the cytoplasm. It carries out the reaction urea + 2 H2O + H(+) = hydrogencarbonate + 2 NH4(+). It functions in the pathway nitrogen metabolism; urea degradation; CO(2) and NH(3) from urea (urease route): step 1/1. The polypeptide is Urease subunit alpha (Pseudomonas savastanoi pv. phaseolicola (strain 1448A / Race 6) (Pseudomonas syringae pv. phaseolicola (strain 1448A / Race 6))).